The chain runs to 535 residues: D-2-hydroxyglutarate dehydrogenase, mitochondrial (535 aa).

The transit peptide at 1 to 50 (MVLHLVPRWSASLFRASPRWKKTYSQRASAQLKWLGCPRSVYSPLACRAY) directs the protein to the mitochondrion. One can recognise an FAD-binding PCMH-type domain in the interval 110–289 (VRGCSKVLLR…TAVSIVCPPR (180 aa)). The residue at position 115 (Lys-115) is an N6-succinyllysine. Positions 400, 404, and 415 each coordinate (R)-2-hydroxyglutarate. Arg-400 is a binding site for (R)-lactate. 3 residues coordinate (R)-malate: Arg-400, Thr-404, and Lys-415. The Zn(2+) site is built by His-448 and His-455. Position 457 (Asn-457) interacts with (R)-2-hydroxyglutarate. Glu-489 lines the Zn(2+) pocket. His-490 is a (R)-2-hydroxyglutarate binding site. Residue His-490 participates in (R)-lactate binding. Position 490 (His-490) interacts with (R)-malate.

The protein belongs to the FAD-binding oxidoreductase/transferase type 4 family. Requires FAD as cofactor.

It is found in the mitochondrion. The enzyme catalyses (R)-2-hydroxyglutarate + A = 2-oxoglutarate + AH2. It carries out the reaction (R)-malate + A = oxaloacetate + AH2. Activated by zinc, cobalt and manganese ions. Inhibited by EDTA. Functionally, catalyzes the oxidation of D-2-hydroxyglutarate (D-2-HG) to alpha-ketoglutarate. Also catalyzes the oxidation of other D-2-hydroxyacids, such as D-malate (D-MAL) and D-lactate (D-LAC). Exhibits high activities towards D-2-HG and D-MAL but a very weak activity towards D-LAC. The polypeptide is D-2-hydroxyglutarate dehydrogenase, mitochondrial (Rattus norvegicus (Rat)).